The primary structure comprises 437 residues: Ribosomal protein uS12 methylthiotransferase RimO (437 aa).

An MTTase N-terminal domain is found at 3-114 (ATIAVTHLGC…IVEVVERSRT (112 aa)). 6 residues coordinate [4Fe-4S] cluster: cysteine 12, cysteine 48, cysteine 77, cysteine 152, cysteine 156, and cysteine 159. The Radical SAM core domain maps to 138–367 (TTTEAVAYLK…MRLQQTISQR (230 aa)). Positions 370-436 (ASQVGRVVPV…PYDLCGEVFQ (67 aa)) constitute a TRAM domain.

The protein belongs to the methylthiotransferase family. RimO subfamily. Requires [4Fe-4S] cluster as cofactor.

The protein localises to the cytoplasm. It catalyses the reaction L-aspartate(89)-[ribosomal protein uS12]-hydrogen + (sulfur carrier)-SH + AH2 + 2 S-adenosyl-L-methionine = 3-methylsulfanyl-L-aspartate(89)-[ribosomal protein uS12]-hydrogen + (sulfur carrier)-H + 5'-deoxyadenosine + L-methionine + A + S-adenosyl-L-homocysteine + 2 H(+). Its function is as follows. Catalyzes the methylthiolation of an aspartic acid residue of ribosomal protein uS12. In Gloeobacter violaceus (strain ATCC 29082 / PCC 7421), this protein is Ribosomal protein uS12 methylthiotransferase RimO.